The following is a 1492-amino-acid chain: Condensin-2 complex subunit D3-L (1492 aa).

Positions 152-201 (WPRDPNASRKRKKDTLKSSQGDNRGGRKRPRPPRRDEQEMEDLSEEEQDE) are disordered. Residues 189–201 (QEMEDLSEEEQDE) are compositionally biased toward acidic residues. HEAT repeat units follow at residues 543–581 (SSDG…CHLI), 583–619 (CSSE…AQPH), and 621–659 (VLIQ…QSIT). 3 disordered regions span residues 1269-1345 (QLER…PRPR), 1359-1406 (RKAA…SLVG), and 1454-1492 (IMSP…KPSN). Positions 1277-1290 (NVQNPPSAESTGSP) are enriched in polar residues. Over residues 1377-1388 (PSTPSPARTTSS) the composition is skewed to low complexity.

Component of the condensin-2 complex, which contains the smc2 and smc4 heterodimer, and three non SMC subunits, ncapg2, ncaph2 and ncapd3 that probably regulate the complex.

The protein resides in the nucleus. Regulatory subunit of the condensin-2 complex, a complex which establishes mitotic chromosome architecture and is involved in physical rigidity of the chromatid axis. This is Condensin-2 complex subunit D3-L from Xenopus laevis (African clawed frog).